The chain runs to 342 residues: Glyceraldehyde-3-phosphate dehydrogenase (342 aa).

Residues 12–13 (RI), Asp34, Lys78, and Thr120 each bind NAD(+). D-glyceraldehyde 3-phosphate is bound by residues 151 to 153 (SCT) and Thr182. The Nucleophile role is filled by Cys152. Asn183 lines the NAD(+) pocket. D-glyceraldehyde 3-phosphate contacts are provided by residues Arg197, 210-211 (TG), and Arg233. Residue Asn322 participates in NAD(+) binding.

This sequence belongs to the glyceraldehyde-3-phosphate dehydrogenase family. Homotetramer.

The protein localises to the cytoplasm. It carries out the reaction D-glyceraldehyde 3-phosphate + phosphate + NAD(+) = (2R)-3-phospho-glyceroyl phosphate + NADH + H(+). The protein operates within carbohydrate degradation; glycolysis; pyruvate from D-glyceraldehyde 3-phosphate: step 1/5. Its function is as follows. Catalyzes the oxidative phosphorylation of glyceraldehyde 3-phosphate (G3P) to 1,3-bisphosphoglycerate (BPG) using the cofactor NAD. The first reaction step involves the formation of a hemiacetal intermediate between G3P and a cysteine residue, and this hemiacetal intermediate is then oxidized to a thioester, with concomitant reduction of NAD to NADH. The reduced NADH is then exchanged with the second NAD, and the thioester is attacked by a nucleophilic inorganic phosphate to produce BPG. This chain is Glyceraldehyde-3-phosphate dehydrogenase (gap), found in Aquifex aeolicus (strain VF5).